The sequence spans 62 residues: Large ribosomal subunit protein uL29 (62 aa).

This sequence belongs to the universal ribosomal protein uL29 family.

The sequence is that of Large ribosomal subunit protein uL29 from Desulfosudis oleivorans (strain DSM 6200 / JCM 39069 / Hxd3) (Desulfococcus oleovorans).